A 183-amino-acid chain; its full sequence is uncharacterized protein (183 aa).

Residues 27-170 (MIKLIDSARS…VAEIMMQKHL (144 aa)) form the SIS domain.

This sequence belongs to the SIS family. PHI subfamily.

This is an uncharacterized protein from Archaeoglobus fulgidus (strain ATCC 49558 / DSM 4304 / JCM 9628 / NBRC 100126 / VC-16).